We begin with the raw amino-acid sequence, 215 residues long: Secretory component protein psh3 (215 aa).

The Cytoplasmic segment spans residues Met1–Tyr21. Residues Gly22–Val42 traverse the membrane as a helical segment. The Extracellular portion of the chain corresponds to Asn43–Ser67. Residues His68 to Ile88 traverse the membrane as a helical segment. The Cytoplasmic segment spans residues Gln89–Thr105. A helical membrane pass occupies residues Leu106–Val126. Residues Lys127–His147 lie on the Extracellular side of the membrane. The chain crosses the membrane as a helical span at residues Val148 to Tyr168. Residues His169–Lys215 lie on the Cytoplasmic side of the membrane. The disordered stretch occupies residues Lys190–Lys215. The span at Glu196–Lys215 shows a compositional bias: low complexity.

To yeast SHR3. As to quaternary structure, monomer.

Its subcellular location is the endoplasmic reticulum membrane. Its function is as follows. Involved in amino acid permease processing and required for the efficient translocation of structurally related amino acid permeases from the endoplasmic reticulum to the plasma membrane. This chain is Secretory component protein psh3 (psh3), found in Schizosaccharomyces pombe (strain 972 / ATCC 24843) (Fission yeast).